The following is a 136-amino-acid chain: Transcription antitermination protein NusB (136 aa).

Belongs to the NusB family.

Functionally, involved in transcription antitermination. Required for transcription of ribosomal RNA (rRNA) genes. Binds specifically to the boxA antiterminator sequence of the ribosomal RNA (rrn) operons. This Pseudoalteromonas translucida (strain TAC 125) protein is Transcription antitermination protein NusB.